A 95-amino-acid chain; its full sequence is Aspartyl/glutamyl-tRNA(Asn/Gln) amidotransferase subunit C (95 aa).

Belongs to the GatC family. In terms of assembly, heterotrimer of A, B and C subunits.

The enzyme catalyses L-glutamyl-tRNA(Gln) + L-glutamine + ATP + H2O = L-glutaminyl-tRNA(Gln) + L-glutamate + ADP + phosphate + H(+). The catalysed reaction is L-aspartyl-tRNA(Asn) + L-glutamine + ATP + H2O = L-asparaginyl-tRNA(Asn) + L-glutamate + ADP + phosphate + 2 H(+). Its function is as follows. Allows the formation of correctly charged Asn-tRNA(Asn) or Gln-tRNA(Gln) through the transamidation of misacylated Asp-tRNA(Asn) or Glu-tRNA(Gln) in organisms which lack either or both of asparaginyl-tRNA or glutaminyl-tRNA synthetases. The reaction takes place in the presence of glutamine and ATP through an activated phospho-Asp-tRNA(Asn) or phospho-Glu-tRNA(Gln). In Geotalea daltonii (strain DSM 22248 / JCM 15807 / FRC-32) (Geobacter daltonii), this protein is Aspartyl/glutamyl-tRNA(Asn/Gln) amidotransferase subunit C.